The chain runs to 353 residues: UPF0283 membrane protein YcjF (353 aa).

3 helical membrane passes run methionine 70–threonine 90, valine 100–valine 120, and glutamate 213–tryptophan 233.

The protein belongs to the UPF0283 family.

The protein resides in the cell inner membrane. The sequence is that of UPF0283 membrane protein YcjF from Shigella sonnei (strain Ss046).